The chain runs to 206 residues: Ribosome maturation factor RimP (206 aa).

The tract at residues 164-206 is disordered; sequence GGIPEGRAVPSDAVDLTDDSGVDSVEDDEAELEDVENEEGFDK. A compositionally biased stretch (acidic residues) spans 178 to 206; the sequence is DLTDDSGVDSVEDDEAELEDVENEEGFDK.

The protein belongs to the RimP family.

It localises to the cytoplasm. Functionally, required for maturation of 30S ribosomal subunits. This is Ribosome maturation factor RimP from Rhodococcus erythropolis (strain PR4 / NBRC 100887).